Reading from the N-terminus, the 184-residue chain is Potassium-transporting ATPase KdpC subunit (184 aa).

The helical transmembrane segment at 10-30 (LTFLMVVLFAVIYPLAIYGIA) threads the bilayer.

Belongs to the KdpC family. In terms of assembly, the system is composed of three essential subunits: KdpA, KdpB and KdpC.

It is found in the cell inner membrane. In terms of biological role, part of the high-affinity ATP-driven potassium transport (or Kdp) system, which catalyzes the hydrolysis of ATP coupled with the electrogenic transport of potassium into the cytoplasm. This subunit acts as a catalytic chaperone that increases the ATP-binding affinity of the ATP-hydrolyzing subunit KdpB by the formation of a transient KdpB/KdpC/ATP ternary complex. The protein is Potassium-transporting ATPase KdpC subunit of Flavobacterium psychrophilum (strain ATCC 49511 / DSM 21280 / CIP 103535 / JIP02/86).